Reading from the N-terminus, the 163-residue chain is Ribosome maturation factor RimM (163 aa).

A PRC barrel domain is found at 94–162 (ADEYYYIDLI…DHLVIAADFI (69 aa)).

Belongs to the RimM family. In terms of assembly, binds ribosomal protein uS19.

The protein localises to the cytoplasm. In terms of biological role, an accessory protein needed during the final step in the assembly of 30S ribosomal subunit, possibly for assembly of the head region. Essential for efficient processing of 16S rRNA. May be needed both before and after RbfA during the maturation of 16S rRNA. It has affinity for free ribosomal 30S subunits but not for 70S ribosomes. The protein is Ribosome maturation factor RimM of Zymomonas mobilis subsp. mobilis (strain ATCC 31821 / ZM4 / CP4).